The chain runs to 184 residues: ADP-ribosylation factor-like protein 8c (184 aa).

An intramembrane region (note=Mediates targeting to membranes) is located at residues 1–18 (MGLWDSLLNWLRSLFFKQ). GTP-binding positions include 29 to 34 (NAGKTS), 48 to 51 (MIPT), 70 to 74 (DLGGQ), and 129 to 132 (NKID).

Belongs to the small GTPase superfamily. Arf family. Interacts with tubulin.

It localises to the late endosome membrane. The protein resides in the lysosome membrane. It is found in the cytoplasm. Its subcellular location is the cytoskeleton. The protein localises to the spindle. May play a role in lysosome motility. May play a role in chromosome segregation. In terms of biological role, (Microbial infection) Component of tomato mosaic virus (ToMV) RNA replication complexes. Required for tobamovirus multiplication, especially for efficient negative-strand RNA synthesis and viral RNA capping. In Arabidopsis thaliana (Mouse-ear cress), this protein is ADP-ribosylation factor-like protein 8c.